Consider the following 478-residue polypeptide: ATP synthase subunit beta (478 aa).

ATP is bound at residue 155 to 162 (GGAGVGKT).

It belongs to the ATPase alpha/beta chains family. F-type ATPases have 2 components, CF(1) - the catalytic core - and CF(0) - the membrane proton channel. CF(1) has five subunits: alpha(3), beta(3), gamma(1), delta(1), epsilon(1). CF(0) has three main subunits: a(1), b(2) and c(9-12). The alpha and beta chains form an alternating ring which encloses part of the gamma chain. CF(1) is attached to CF(0) by a central stalk formed by the gamma and epsilon chains, while a peripheral stalk is formed by the delta and b chains.

Its subcellular location is the cell inner membrane. It catalyses the reaction ATP + H2O + 4 H(+)(in) = ADP + phosphate + 5 H(+)(out). Functionally, produces ATP from ADP in the presence of a proton gradient across the membrane. The catalytic sites are hosted primarily by the beta subunits. The sequence is that of ATP synthase subunit beta from Fuscovulum blasticum (Rhodobacter blasticus).